Consider the following 299-residue polypeptide: Ribosomal protein L11 methyltransferase (299 aa).

T152, G172, D194, and N234 together coordinate S-adenosyl-L-methionine.

It belongs to the methyltransferase superfamily. PrmA family.

Its subcellular location is the cytoplasm. The enzyme catalyses L-lysyl-[protein] + 3 S-adenosyl-L-methionine = N(6),N(6),N(6)-trimethyl-L-lysyl-[protein] + 3 S-adenosyl-L-homocysteine + 3 H(+). Methylates ribosomal protein L11. The chain is Ribosomal protein L11 methyltransferase from Geobacter metallireducens (strain ATCC 53774 / DSM 7210 / GS-15).